A 1083-amino-acid chain; its full sequence is Neisserial autotransporter lipoprotein NalP (1083 aa).

Residues Met-1–Ala-27 form the signal peptide. Residue Cys-28 is the site of N-palmitoyl cysteine attachment. The S-diacylglycerol cysteine moiety is linked to residue Cys-28. Residues Asn-111–Met-483 enclose the Peptidase S8 domain. Catalysis depends on charge relay system residues Asp-139, His-211, and Ser-427. The region spanning Asp-809–Phe-1083 is the Autotransporter domain. Transmembrane regions (beta stranded) follow at residues Arg-819–Gly-828, Thr-844–Lys-852, Thr-858–Gly-866, Ser-883–Asp-891, Tyr-897–Arg-906, Gln-931–Pro-941, Leu-948–Leu-958, Val-984–Pro-994, Val-1000–Asp-1010, Arg-1041–Phe-1052, Asn-1057–Gly-1066, and Ser-1074–Phe-1083.

This sequence belongs to the peptidase S8 family. Post-translationally, a fusion protein of the first 44 residues with beta-lactamase is lipidated in E.coli, strongly suggesting this is a lipoprotein in situ. The lipidated form is briefly retained on the cell surface which allows it to process its endogenous substrates on the cell surface before the passenger domain is released into the medium.

It localises to the cell outer membrane. The protein localises to the cell surface. It is found in the secreted. In terms of biological role, major human immunogenic protein. Autotransporter with a secreted protease domain involved in processing other autotransporter proteins including App and IgA. Probably autoprocesses to release the about 70 kDa passenger domain. Processes the lactoferrin receptor lipoprotein subunit (LbpB) extracellularly, releasing it from the cell surface. LbpB release protects bacteria against complement-mediated killing by anti-LbpB antibodies. Processes NHBA. Lipidation slows its auto-processing, probably allowing it to act on endogenous substrates on the cell surface before the passenger domain is released into the medium. The C-terminal beta-barrel domain inserts into the outer membrane where it probably exports the N-terminal passenger domain. Both the cell surface protein (Neisserial autotransporter lipoprotein NalP) and the passenger domain cleave human (host) complement factor C3, generating a shorter alpha chain and a longer beta chain than normal. Its function is as follows. Plays a role in extracellular-DNA (eDNA) mediated biofilm formation. In some strains (including cc32 strain H44/76 but not cc11 strain B16B6) eDNA stimulates biofilm formation. When NalP is not expressed (and no longer processes NHBA or IgA) biofilm formation increases. This is probably because the number of positively charged, DNA-binding peptides on the cell surface rises, resulting in increased biofilm formation. Cleaves human (host) complement factor C3, generating a shorter alpha chain and a longer beta chain than normal. Does not act on mouse or rabbit C3. Cleavage causes C3b degradation by human CFI and CFH, decreases deposition of C3b on the bacteria surface and probably facilitates complement escape. The chain is Neisserial autotransporter lipoprotein NalP from Neisseria meningitidis serogroup B / serotype 15 (strain H44/76).